The chain runs to 249 residues: Serine 3-dehydrogenase (249 aa).

6 to 30 (LITGATSGFGQATARRFVKEGWKVI) lines the NADP(+) pocket. Serine 135 serves as a coordination point for substrate. The active-site Proton acceptor is the tyrosine 148.

The protein belongs to the short-chain dehydrogenases/reductases (SDR) family. Homotetramer.

The enzyme catalyses L-serine + NADP(+) = aminoacetaldehyde + CO2 + NADPH. In terms of biological role, catalyzes the oxidation of the hydroxyl group of serine to form 2-aminomalonate semialdehyde which is spontaneously converted into 2-aminoacetaldehyde and CO(2). Also acts on D-serine, L-glycerate, D-glycerate and 2-methyl-DL-serine. Does not act on O-methyl-DL-serine and L-threonine. This is Serine 3-dehydrogenase (sdh) from Agrobacterium fabrum (strain C58 / ATCC 33970) (Agrobacterium tumefaciens (strain C58)).